The sequence spans 355 residues: Daphnetin O-methyltransferase 1 (355 aa).

Residues aspartate 222, aspartate 242, and lysine 256 each contribute to the S-adenosyl-L-homocysteine site. Histidine 260 serves as the catalytic Proton acceptor.

The protein belongs to the class I-like SAM-binding methyltransferase superfamily. Cation-independent O-methyltransferase family. COMT subfamily.

It carries out the reaction 7,8-dihydroxycoumarin + S-adenosyl-L-methionine = 7-hydroxy-8-methoxycoumarin + S-adenosyl-L-homocysteine + H(+). The protein operates within aromatic compound metabolism. It participates in secondary metabolite biosynthesis. Its function is as follows. O-methyltransferase involved in the biosynthesis of coumarins natural products such as daphnetin derivatives. Catalyzes specifically the methylation of daphnetin (7,8-dihydroxycoumarin) to produce hydrangetin (7-hydroxy-8-methoxycoumarin). Probably involved in acclimation to low temperature conditions. The sequence is that of Daphnetin O-methyltransferase 1 from Secale cereale (Rye).